The sequence spans 380 residues: Pregnancy-associated glycoprotein 4 (380 aa).

The N-terminal stretch at 1-15 (MKWLVLLGLVAFSEC) is a signal peptide. Residues 16–53 (IFKIPLRRVKTMRKTLSGKNMLNDVLKEHPYRLPQISF) constitute a propeptide, activation peptide. Residues 71 to 377 (YVGNITIGTP…DRGNDRIGLA (307 aa)) enclose the Peptidase A1 domain. An N-linked (GlcNAc...) asparagine glycan is attached at Asn-74. Asp-89 is a catalytic residue. Cys-102 and Cys-107 are disulfide-bonded. Asn-125 carries an N-linked (GlcNAc...) asparagine glycan. Cysteines 261 and 265 form a disulfide. Residue Asp-270 is part of the active site. A disulfide bridge links Cys-303 with Cys-337.

Belongs to the peptidase A1 family. As to expression, trophoblast and placental tissue. Produced specifically in the invasive binucleate cells of the placenta.

Its subcellular location is the secreted. The protein resides in the extracellular space. The protein is Pregnancy-associated glycoprotein 4 of Ovis aries (Sheep).